A 484-amino-acid polypeptide reads, in one-letter code: 3-isopropylmalate dehydratase large subunit (484 aa).

[4Fe-4S] cluster is bound by residues Cys-352, Cys-412, and Cys-415. The interval Gly-462–Ala-484 is disordered.

It belongs to the aconitase/IPM isomerase family. LeuC type 1 subfamily. Heterodimer of LeuC and LeuD. [4Fe-4S] cluster serves as cofactor.

The catalysed reaction is (2R,3S)-3-isopropylmalate = (2S)-2-isopropylmalate. The protein operates within amino-acid biosynthesis; L-leucine biosynthesis; L-leucine from 3-methyl-2-oxobutanoate: step 2/4. In terms of biological role, catalyzes the isomerization between 2-isopropylmalate and 3-isopropylmalate, via the formation of 2-isopropylmaleate. The polypeptide is 3-isopropylmalate dehydratase large subunit (Arthrobacter sp. (strain FB24)).